A 409-amino-acid chain; its full sequence is Mitochondrial import inner membrane translocase subunit TIM50-B (409 aa).

A mitochondrion-targeting transit peptide spans 1-42; sequence MSLIAIERVLCGWPKICRKLIVTSRSLTSGLRRALVKQPRKG. Residues 43–127 are Mitochondrial matrix-facing; it reads GDVGKPGMEL…ELERAFRRMK (85 aa). The tract at residues 93-114 is disordered; sequence PQTSEESNDEESRERRKLEEEE. The span at 102–111 shows a compositional bias: basic and acidic residues; sequence EESRERRKLE. The chain crosses the membrane as a helical span at residues 128–148; that stretch reads LGFGLFGIGSMLFSFWAIYFY. Residues 149 to 409 lie on the Mitochondrial intermembrane side of the membrane; sequence GRPSLDEHGN…KNWTRGFINH (261 aa). Residues 205–348 enclose the FCP1 homology domain; that stretch reads YVQPPYTLVL…FELTSFLSVL (144 aa).

It belongs to the TIM50 family. In terms of assembly, component of the TIM23 complex at least composed of Tim23, Tim17 (Tim17a1, Tim17a2 or Tim17b1) and a Tim50. Exclusively expressed in the testis.

The protein localises to the mitochondrion inner membrane. In terms of biological role, essential component of the TIM23 complex, a complex that mediates the translocation of transit peptide-containing proteins across the mitochondrial inner membrane. This Drosophila melanogaster (Fruit fly) protein is Mitochondrial import inner membrane translocase subunit TIM50-B (ttm2).